Consider the following 177-residue polypeptide: MSEFVTVARPYAKAAFDFAVEHQNVDRWQDMLAFAAEVTKNEQMAEMLSGALAPETLAASFIAVCGEQLDTSGQNLIKVMAENGRLRVLPDVLEQFEHLRALSEATAEVEVTSANELSEEQLAKITAAMEKRLSRKVKLNCKIDKSVMAGVIIRAGDMVIDGSVRGRLQRLSDVLQS.

The protein belongs to the ATPase delta chain family. As to quaternary structure, F-type ATPases have 2 components, F(1) - the catalytic core - and F(0) - the membrane proton channel. F(1) has five subunits: alpha(3), beta(3), gamma(1), delta(1), epsilon(1). F(0) has three main subunits: a(1), b(2) and c(10-14). The alpha and beta chains form an alternating ring which encloses part of the gamma chain. F(1) is attached to F(0) by a central stalk formed by the gamma and epsilon chains, while a peripheral stalk is formed by the delta and b chains.

It localises to the cell inner membrane. In terms of biological role, f(1)F(0) ATP synthase produces ATP from ADP in the presence of a proton or sodium gradient. F-type ATPases consist of two structural domains, F(1) containing the extramembraneous catalytic core and F(0) containing the membrane proton channel, linked together by a central stalk and a peripheral stalk. During catalysis, ATP synthesis in the catalytic domain of F(1) is coupled via a rotary mechanism of the central stalk subunits to proton translocation. Functionally, this protein is part of the stalk that links CF(0) to CF(1). It either transmits conformational changes from CF(0) to CF(1) or is implicated in proton conduction. The protein is ATP synthase subunit delta of Enterobacter sp. (strain 638).